A 488-amino-acid chain; its full sequence is Lysine--tRNA ligase (488 aa).

Mg(2+) contacts are provided by Glu-398 and Glu-405.

It belongs to the class-II aminoacyl-tRNA synthetase family. As to quaternary structure, homodimer. The cofactor is Mg(2+).

The protein localises to the cytoplasm. It carries out the reaction tRNA(Lys) + L-lysine + ATP = L-lysyl-tRNA(Lys) + AMP + diphosphate. This Carboxydothermus hydrogenoformans (strain ATCC BAA-161 / DSM 6008 / Z-2901) protein is Lysine--tRNA ligase.